A 516-amino-acid polypeptide reads, in one-letter code: GMP synthase [glutamine-hydrolyzing] (516 aa).

The 191-residue stretch at 8–198 (KILILDFGSQ…VVNICGCDTL (191 aa)) folds into the Glutamine amidotransferase type-1 domain. C84 serves as the catalytic Nucleophile. Active-site residues include H172 and E174. The GMPS ATP-PPase domain maps to 199-391 (WNIENIIEND…LGLPYNMLYR (193 aa)). 226-232 (SGGVDSS) serves as a coordination point for ATP.

As to quaternary structure, homodimer.

The catalysed reaction is XMP + L-glutamine + ATP + H2O = GMP + L-glutamate + AMP + diphosphate + 2 H(+). It participates in purine metabolism; GMP biosynthesis; GMP from XMP (L-Gln route): step 1/1. In terms of biological role, catalyzes the synthesis of GMP from XMP. The sequence is that of GMP synthase [glutamine-hydrolyzing] from Francisella tularensis subsp. novicida (strain U112).